The following is a 102-amino-acid chain: Small ribosomal subunit protein uS10 (102 aa).

Belongs to the universal ribosomal protein uS10 family. As to quaternary structure, part of the 30S ribosomal subunit.

Functionally, involved in the binding of tRNA to the ribosomes. This chain is Small ribosomal subunit protein uS10, found in Lactobacillus helveticus (strain DPC 4571).